The following is a 558-amino-acid chain: Dihydroxy-acid dehydratase (558 aa).

Cysteine 51 is a [2Fe-2S] cluster binding site. Aspartate 83 contributes to the Mg(2+) binding site. A [2Fe-2S] cluster-binding site is contributed by cysteine 124. Positions 125 and 126 each coordinate Mg(2+). Lysine 126 carries the post-translational modification N6-carboxylysine. Cysteine 196 lines the [2Fe-2S] cluster pocket. A Mg(2+)-binding site is contributed by glutamate 447. Residue serine 473 is the Proton acceptor of the active site.

This sequence belongs to the IlvD/Edd family. As to quaternary structure, homodimer. The cofactor is [2Fe-2S] cluster. Mg(2+) is required as a cofactor.

It carries out the reaction (2R)-2,3-dihydroxy-3-methylbutanoate = 3-methyl-2-oxobutanoate + H2O. It catalyses the reaction (2R,3R)-2,3-dihydroxy-3-methylpentanoate = (S)-3-methyl-2-oxopentanoate + H2O. It participates in amino-acid biosynthesis; L-isoleucine biosynthesis; L-isoleucine from 2-oxobutanoate: step 3/4. It functions in the pathway amino-acid biosynthesis; L-valine biosynthesis; L-valine from pyruvate: step 3/4. In terms of biological role, functions in the biosynthesis of branched-chain amino acids. Catalyzes the dehydration of (2R,3R)-2,3-dihydroxy-3-methylpentanoate (2,3-dihydroxy-3-methylvalerate) into 2-oxo-3-methylpentanoate (2-oxo-3-methylvalerate) and of (2R)-2,3-dihydroxy-3-methylbutanoate (2,3-dihydroxyisovalerate) into 2-oxo-3-methylbutanoate (2-oxoisovalerate), the penultimate precursor to L-isoleucine and L-valine, respectively. The polypeptide is Dihydroxy-acid dehydratase (Flavobacterium psychrophilum (strain ATCC 49511 / DSM 21280 / CIP 103535 / JIP02/86)).